The following is a 121-amino-acid chain: Putative membrane protein insertion efficiency factor (121 aa).

It belongs to the UPF0161 family.

It is found in the cell inner membrane. Could be involved in insertion of integral membrane proteins into the membrane. This chain is Putative membrane protein insertion efficiency factor, found in Rhodopseudomonas palustris (strain HaA2).